Here is a 131-residue protein sequence, read N- to C-terminus: Small ribosomal subunit protein uS8 (131 aa).

The protein belongs to the universal ribosomal protein uS8 family. In terms of assembly, part of the 30S ribosomal subunit. Contacts proteins S5 and S12.

Its function is as follows. One of the primary rRNA binding proteins, it binds directly to 16S rRNA central domain where it helps coordinate assembly of the platform of the 30S subunit. This Phocaeicola vulgatus (strain ATCC 8482 / DSM 1447 / JCM 5826 / CCUG 4940 / NBRC 14291 / NCTC 11154) (Bacteroides vulgatus) protein is Small ribosomal subunit protein uS8.